Reading from the N-terminus, the 121-residue chain is Basic phospholipase A2 BmjeTX-II (121 aa).

7 cysteine pairs are disulfide-bonded: cysteine 26–cysteine 114, cysteine 28–cysteine 45, cysteine 44–cysteine 95, cysteine 50–cysteine 121, cysteine 51–cysteine 88, cysteine 58–cysteine 82, and cysteine 76–cysteine 86. Residues tyrosine 27, glycine 29, and glycine 31 each contribute to the Ca(2+) site. Residue histidine 48 is part of the active site. Ca(2+) is bound at residue aspartate 49. Aspartate 89 is a catalytic residue.

The cofactor is Ca(2+). In terms of tissue distribution, expressed by the venom gland.

The protein localises to the secreted. The catalysed reaction is a 1,2-diacyl-sn-glycero-3-phosphocholine + H2O = a 1-acyl-sn-glycero-3-phosphocholine + a fatty acid + H(+). Its function is as follows. Snake venom phospholipase A2 (PLA2) that induces blockade of neuromuscular contraction in an indirectly stimulated chick biventer cervicis nerve-muscle preparation. Does not inhibit contraction of chick biventer cervicic nerve-muscle preparation in response to treatment with acetylcholine or KCl. The neuromuscular blockade is mediated by inhibitory action at the presynaptic motor nerve endings. Lyses skeletal myoblasts and myotubes in vitro, and intramuscular injection causes local muscle necrosis. Induces edema in the mouse foot pad. Induces a transient increase of IL-6 levels. PLA2 catalyzes the calcium-dependent hydrolysis of the 2-acyl groups in 3-sn-phosphoglycerides. The chain is Basic phospholipase A2 BmjeTX-II from Bothrops marajoensis (Marajo lancehead).